We begin with the raw amino-acid sequence, 57 residues long: MKVMSANANVVAAKIMNNAKNHVAAQRGVTATTNAPAVTSLKKPRSHAALGNETNSL.

This is an uncharacterized protein from Saccharomyces cerevisiae (strain ATCC 204508 / S288c) (Baker's yeast).